The following is a 497-amino-acid chain: Glycerol kinase (497 aa).

Thr11 is an ADP binding site. Residues Thr11, Thr12, and Ser13 each contribute to the ATP site. Thr11 contacts sn-glycerol 3-phosphate. Arg15 is a binding site for ADP. Sn-glycerol 3-phosphate contacts are provided by Arg81, Glu82, Tyr134, and Asp244. Glycerol-binding residues include Arg81, Glu82, Tyr134, Asp244, and Gln245. 2 residues coordinate ADP: Thr266 and Gly309. ATP contacts are provided by Thr266, Gly309, Gln313, and Gly410. ADP is bound by residues Gly410 and Asn414.

This sequence belongs to the FGGY kinase family.

The catalysed reaction is glycerol + ATP = sn-glycerol 3-phosphate + ADP + H(+). It functions in the pathway polyol metabolism; glycerol degradation via glycerol kinase pathway; sn-glycerol 3-phosphate from glycerol: step 1/1. Its activity is regulated as follows. Inhibited by fructose 1,6-bisphosphate (FBP). Its function is as follows. Key enzyme in the regulation of glycerol uptake and metabolism. Catalyzes the phosphorylation of glycerol to yield sn-glycerol 3-phosphate. In Fusobacterium nucleatum subsp. nucleatum (strain ATCC 25586 / DSM 15643 / BCRC 10681 / CIP 101130 / JCM 8532 / KCTC 2640 / LMG 13131 / VPI 4355), this protein is Glycerol kinase.